A 308-amino-acid chain; its full sequence is ADP-L-glycero-D-manno-heptose-6-epimerase (308 aa).

NADP(+)-binding positions include Met-10 to Ile-11, Asp-31 to Asn-32, Lys-38, Lys-53, Glu-75 to Ser-79, and Asn-92. Tyr-140 (proton acceptor) is an active-site residue. Lys-144 is a binding site for NADP(+). Asn-169 contacts substrate. 2 residues coordinate NADP(+): Val-170 and Lys-178. Lys-178 (proton acceptor) is an active-site residue. Substrate-binding positions include Ser-180, His-187, Phe-201–Ser-204, Arg-209, and Tyr-272.

It belongs to the NAD(P)-dependent epimerase/dehydratase family. HldD subfamily. In terms of assembly, homopentamer. NADP(+) serves as cofactor.

It carries out the reaction ADP-D-glycero-beta-D-manno-heptose = ADP-L-glycero-beta-D-manno-heptose. The protein operates within nucleotide-sugar biosynthesis; ADP-L-glycero-beta-D-manno-heptose biosynthesis; ADP-L-glycero-beta-D-manno-heptose from D-glycero-beta-D-manno-heptose 7-phosphate: step 4/4. Functionally, catalyzes the interconversion between ADP-D-glycero-beta-D-manno-heptose and ADP-L-glycero-beta-D-manno-heptose via an epimerization at carbon 6 of the heptose. The chain is ADP-L-glycero-D-manno-heptose-6-epimerase from Actinobacillus pleuropneumoniae serotype 7 (strain AP76).